A 553-amino-acid polypeptide reads, in one-letter code: Glycerol kinase 3 (553 aa).

Residue Thr20 participates in substrate binding. Arg24 is a binding site for ATP. Arg94, Tyr148, and Asp259 together coordinate substrate. Residues Thr281, Gly326, and 427 to 431 contribute to the ATP site; that span reads GMTSN.

The protein belongs to the FGGY kinase family.

It localises to the mitochondrion outer membrane. It is found in the cytoplasm. It catalyses the reaction glycerol + ATP = sn-glycerol 3-phosphate + ADP + H(+). It participates in polyol metabolism; glycerol degradation via glycerol kinase pathway; sn-glycerol 3-phosphate from glycerol: step 1/1. May be involved in the regulation of glycerol uptake and metabolism. In Homo sapiens (Human), this protein is Glycerol kinase 3.